The chain runs to 143 residues: MFFLTIYHLIYKYNPLIFAQIFIGCLMYFMLIIFVWKIIDPKCFSKYICYIIIFAIIDFVVCFKFIYVKKNSSVKKVHVVTIGQANVPIETSEISDNTDYKVTYDQVSCTIDSSNNVNNMFLTSDNPVECLDEISETSLTQDE.

2 consecutive transmembrane segments (helical) span residues leucine 16–tryptophan 36 and isoleucine 48–valine 68. Asparagine 71 carries an N-linked (GlcNAc...) asparagine; by host glycan.

The protein resides in the membrane. This is an uncharacterized protein from Acanthamoeba polyphaga (Amoeba).